Consider the following 180-residue polypeptide: UPF0690 protein C1orf52 homolog (180 aa).

Disordered regions lie at residues 1-66 and 96-180; these read MAAE…SVTR and KIWK…KKKK. The segment covering 48–61 has biased composition (basic and acidic residues); the sequence is KQAEKRLPGPDELF. A Phosphothreonine modification is found at threonine 65. At tyrosine 130 the chain carries Phosphotyrosine. Positions 149–160 are enriched in acidic residues; sequence EGEETVESDDDK. Serine 156 carries the post-translational modification Phosphoserine. Over residues 161–180 the composition is skewed to basic and acidic residues; the sequence is DERASKIRRVEPGEAAKKKK.

Belongs to the UPF0690 family.

This Mus musculus (Mouse) protein is UPF0690 protein C1orf52 homolog.